The sequence spans 207 residues: Large ribosomal subunit protein uL4 (207 aa).

The disordered stretch occupies residues 52-76; sequence KNTSLVSGGGKKPWKQKGTGRARQG.

It belongs to the universal ribosomal protein uL4 family. As to quaternary structure, part of the 50S ribosomal subunit.

In terms of biological role, one of the primary rRNA binding proteins, this protein initially binds near the 5'-end of the 23S rRNA. It is important during the early stages of 50S assembly. It makes multiple contacts with different domains of the 23S rRNA in the assembled 50S subunit and ribosome. Functionally, forms part of the polypeptide exit tunnel. The polypeptide is Large ribosomal subunit protein uL4 (Myxococcus xanthus (strain DK1622)).